The primary structure comprises 283 residues: Pantothenate synthetase (283 aa).

Residue 30–37 (MGNLHDGH) participates in ATP binding. Catalysis depends on H37, which acts as the Proton donor. Residue Q61 participates in (R)-pantoate binding. Position 61 (Q61) interacts with beta-alanine. 149–152 (GEKD) contacts ATP. A (R)-pantoate-binding site is contributed by Q155. Residues V178 and 186-189 (LSSR) each bind ATP.

It belongs to the pantothenate synthetase family. In terms of assembly, homodimer.

It is found in the cytoplasm. It catalyses the reaction (R)-pantoate + beta-alanine + ATP = (R)-pantothenate + AMP + diphosphate + H(+). The protein operates within cofactor biosynthesis; (R)-pantothenate biosynthesis; (R)-pantothenate from (R)-pantoate and beta-alanine: step 1/1. Its function is as follows. Catalyzes the condensation of pantoate with beta-alanine in an ATP-dependent reaction via a pantoyl-adenylate intermediate. This is Pantothenate synthetase from Salmonella arizonae (strain ATCC BAA-731 / CDC346-86 / RSK2980).